The following is a 436-amino-acid chain: Trigger factor (436 aa).

One can recognise a PPIase FKBP-type domain in the interval 163–248 (GDTVNIDFDG…VNEIKYKDVP (86 aa)).

This sequence belongs to the FKBP-type PPIase family. Tig subfamily.

Its subcellular location is the cytoplasm. The catalysed reaction is [protein]-peptidylproline (omega=180) = [protein]-peptidylproline (omega=0). Functionally, involved in protein export. Acts as a chaperone by maintaining the newly synthesized protein in an open conformation. Functions as a peptidyl-prolyl cis-trans isomerase. The protein is Trigger factor of Staphylococcus saprophyticus subsp. saprophyticus (strain ATCC 15305 / DSM 20229 / NCIMB 8711 / NCTC 7292 / S-41).